The chain runs to 291 residues: 33 kDa chaperonin (291 aa).

2 disulfide bridges follow: Cys235-Cys237 and Cys268-Cys271.

The protein belongs to the HSP33 family. Under oxidizing conditions two disulfide bonds are formed involving the reactive cysteines. Under reducing conditions zinc is bound to the reactive cysteines and the protein is inactive.

The protein resides in the cytoplasm. Redox regulated molecular chaperone. Protects both thermally unfolding and oxidatively damaged proteins from irreversible aggregation. Plays an important role in the bacterial defense system toward oxidative stress. The sequence is that of 33 kDa chaperonin from Bacillus velezensis (strain DSM 23117 / BGSC 10A6 / LMG 26770 / FZB42) (Bacillus amyloliquefaciens subsp. plantarum).